The primary structure comprises 268 residues: Magnesium dechelatase SGR1, chloroplastic (268 aa).

The N-terminal 48 residues, 1–48 (MCSLSAIMLLPTKLKPAYSDKRSNSSSSSSLFFNNRRSKKKNQSIVPV), are a transit peptide targeting the chloroplast.

Belongs to the staygreen family. In terms of assembly, interacts with HCAR, the chlorophyll catabolic enzymes (CCEs) NYC1, PAO and RCCR, and the LHCII complex. Part of a SGR1-CCE-LHCII complex, which acts in chlorophyll breakdown. As to expression, expressed in roots, leaves, seeds, flowers, buds, petals, sepals and siliques.

Its subcellular location is the plastid. The protein localises to the chloroplast thylakoid membrane. The catalysed reaction is chlorophyll a + 2 H(+) = pheophytin a + Mg(2+). Magnesium chelatase involved in chlorophyll a degradation in the chlorophyll-protein complexes of photosystem I (PSI) and photosystem II (PSII). Contributes to the degradation of PSI and PSII in the thylakoid membranes. Required to trigger chlorophyll degradation during natural and dark-induced leaf senescence. Mediates chlorophyll degradation during embryo degreening. Recombinant SGR1 possesses high dechelating activity against chlorophyll a, very low activity against chlorophyllide a, and no activity against chlorophyll b. Magnesium dechelation of chlorophyll a by SGR1 activates chlorophyll b degradation by inducing the expression of NYC1, an enzyme involved in chlorophyll b degradation. This chain is Magnesium dechelatase SGR1, chloroplastic, found in Arabidopsis thaliana (Mouse-ear cress).